A 271-amino-acid chain; its full sequence is Cell surface glycoprotein CD200 receptor 2 (271 aa).

The first 23 residues, 1–23, serve as a signal peptide directing secretion; that stretch reads MSAPRLLISIIIMVSASSSSCMG. The Extracellular segment spans residues 24–239; sequence GKQMTQNYST…TSGSPALSLL (216 aa). N-linked (GlcNAc...) asparagine glycosylation is found at Asn-30, Asn-39, Asn-86, Asn-92, Asn-189, and Asn-217. The Ig-like V-type domain maps to 46 to 132; it reads MDINAVLCCP…YRGIVVTPDG (87 aa). One can recognise an Ig-like C2-type domain in the interval 133 to 221; sequence NFHRGYHLQV…SHLTGNKSLS (89 aa). Cysteines 160 and 209 form a disulfide. Residues 240 to 260 form a helical membrane-spanning segment; the sequence is IILYVKLSLFVVILVTTGFVF. Residues 261-271 are Cytoplasmic-facing; it reads FQRINHVRKVL.

It belongs to the CD200R family.

The protein localises to the membrane. Functionally, may be a receptor for the CD200/OX2 cell surface glycoprotein. This is Cell surface glycoprotein CD200 receptor 2 (CD200R1L) from Homo sapiens (Human).